Reading from the N-terminus, the 323-residue chain is o-succinylbenzoate synthase (323 aa).

Lysine 134 functions as the Proton donor in the catalytic mechanism. The Mg(2+) site is built by aspartate 162, glutamate 191, and aspartate 214. The active-site Proton acceptor is the lysine 236.

The protein belongs to the mandelate racemase/muconate lactonizing enzyme family. MenC type 1 subfamily. A divalent metal cation is required as a cofactor.

The enzyme catalyses (1R,6R)-6-hydroxy-2-succinyl-cyclohexa-2,4-diene-1-carboxylate = 2-succinylbenzoate + H2O. The protein operates within quinol/quinone metabolism; 1,4-dihydroxy-2-naphthoate biosynthesis; 1,4-dihydroxy-2-naphthoate from chorismate: step 4/7. It participates in quinol/quinone metabolism; menaquinone biosynthesis. Its function is as follows. Converts 2-succinyl-6-hydroxy-2,4-cyclohexadiene-1-carboxylate (SHCHC) to 2-succinylbenzoate (OSB). This is o-succinylbenzoate synthase from Yersinia enterocolitica serotype O:8 / biotype 1B (strain NCTC 13174 / 8081).